Reading from the N-terminus, the 463-residue chain is Fumarate hydratase class II (463 aa).

Substrate is bound by residues 98–100 (SGT), 129–132 (HPND), 139–141 (SSN), and Thr187. His188 functions as the Proton donor/acceptor in the catalytic mechanism. Ser318 is a catalytic residue. Substrate-binding positions include Ser319 and 324-326 (KVN).

Belongs to the class-II fumarase/aspartase family. Fumarase subfamily. Homotetramer.

It is found in the cytoplasm. The catalysed reaction is (S)-malate = fumarate + H2O. Its pathway is carbohydrate metabolism; tricarboxylic acid cycle; (S)-malate from fumarate: step 1/1. In terms of biological role, involved in the TCA cycle. Catalyzes the stereospecific interconversion of fumarate to L-malate. This chain is Fumarate hydratase class II, found in Brucella melitensis biotype 1 (strain ATCC 23456 / CCUG 17765 / NCTC 10094 / 16M).